Consider the following 162-residue polypeptide: UPF0114 protein PST_0950 (162 aa).

3 consecutive transmembrane segments (helical) span residues 15-35 (LLAP…IKFF), 53-73 (LVLT…LVMV), and 136-156 (LMWY…MGYM).

The protein belongs to the UPF0114 family.

Its subcellular location is the cell membrane. This chain is UPF0114 protein PST_0950, found in Stutzerimonas stutzeri (strain A1501) (Pseudomonas stutzeri).